The primary structure comprises 228 residues: Geranylgeranylglyceryl phosphate synthase (228 aa).

Residue K11 participates in sn-glycerol 1-phosphate binding. Positions 13 and 39 each coordinate Mg(2+). Residues 159 to 164 (YIEYSG), G189, and 209 to 210 (GN) contribute to the sn-glycerol 1-phosphate site.

The protein belongs to the GGGP/HepGP synthase family. Group I subfamily. Mg(2+) serves as cofactor.

It is found in the cytoplasm. It catalyses the reaction sn-glycerol 1-phosphate + (2E,6E,10E)-geranylgeranyl diphosphate = sn-3-O-(geranylgeranyl)glycerol 1-phosphate + diphosphate. The protein operates within membrane lipid metabolism; glycerophospholipid metabolism. In terms of biological role, prenyltransferase that catalyzes the transfer of the geranylgeranyl moiety of geranylgeranyl diphosphate (GGPP) to the C3 hydroxyl of sn-glycerol-1-phosphate (G1P). This reaction is the first ether-bond-formation step in the biosynthesis of archaeal membrane lipids. The sequence is that of Geranylgeranylglyceryl phosphate synthase from Methanoregula boonei (strain DSM 21154 / JCM 14090 / 6A8).